The primary structure comprises 418 residues: F-box/LRR-repeat protein 14 (418 aa).

An F-box domain is found at 2-48; that stretch reads ETHISCLFPELLAMIFGYLDVRDKGRAAQVCTAWRDAAYHKSVWRGV. The interval 2–48 is required for down-regulation of SNAI1; the sequence is ETHISCLFPELLAMIFGYLDVRDKGRAAQVCTAWRDAAYHKSVWRGV. LRR repeat units lie at residues 144–163, 170–191, 203–225, 229–250, and 254–275; these read GLEVLELGGCSNITNTGLLL, RLKSLNLRSCRHLSDVGIGHLA, GLEQLTLQDCQKLTDLSLKHISR, GLRLLNLSFCGGISDAGLLHLS, and SLRSLNLRSCDNISDTGIMHLA.

In terms of assembly, part of a SCF (SKP1-cullin-F-box) ubiquitin-protein ligase complex. Interacts with SKP1 and CUL1. Interacts with SNAI1; the interaction requires the phosphorylation of the two serine residues in the substrate destruction motif D-S-G-X(2,3,4)-S.

It is found in the cytoplasm. Its function is as follows. Substrate-recognition component of some SCF (SKP1-CUL1-F-box protein)-type E3 ubiquitin-protein ligase complexes. The SCF(FBXL14) complex acts by mediating ubiquitination and subsequent degradation of SNAI1. The chain is F-box/LRR-repeat protein 14 (FBXL14) from Homo sapiens (Human).